A 431-amino-acid chain; its full sequence is Enolase (431 aa).

Residue glutamine 168 coordinates (2R)-2-phosphoglycerate. Residue glutamate 210 is the Proton donor of the active site. Mg(2+)-binding residues include aspartate 247, glutamate 291, and aspartate 318. Positions 343, 372, 373, and 394 each coordinate (2R)-2-phosphoglycerate. Lysine 343 functions as the Proton acceptor in the catalytic mechanism.

It belongs to the enolase family. As to quaternary structure, component of the RNA degradosome, a multiprotein complex involved in RNA processing and mRNA degradation. Mg(2+) serves as cofactor.

It localises to the cytoplasm. The protein resides in the secreted. Its subcellular location is the cell surface. The enzyme catalyses (2R)-2-phosphoglycerate = phosphoenolpyruvate + H2O. It functions in the pathway carbohydrate degradation; glycolysis; pyruvate from D-glyceraldehyde 3-phosphate: step 4/5. Its function is as follows. Catalyzes the reversible conversion of 2-phosphoglycerate (2-PG) into phosphoenolpyruvate (PEP). It is essential for the degradation of carbohydrates via glycolysis. The sequence is that of Enolase from Acinetobacter baylyi (strain ATCC 33305 / BD413 / ADP1).